We begin with the raw amino-acid sequence, 270 residues long: Diaminopimelate epimerase (270 aa).

Residues Asn15, Gln49, and Asn66 each coordinate substrate. The active-site Proton donor is the Cys75. Substrate contacts are provided by residues 76–77 (GN), Asn155, Asn187, and 204–205 (ER). Cys213 serves as the catalytic Proton acceptor. A substrate-binding site is contributed by 214 to 215 (GS).

Belongs to the diaminopimelate epimerase family. As to quaternary structure, homodimer.

The protein localises to the cytoplasm. It carries out the reaction (2S,6S)-2,6-diaminopimelate = meso-2,6-diaminopimelate. It participates in amino-acid biosynthesis; L-lysine biosynthesis via DAP pathway; DL-2,6-diaminopimelate from LL-2,6-diaminopimelate: step 1/1. In terms of biological role, catalyzes the stereoinversion of LL-2,6-diaminopimelate (L,L-DAP) to meso-diaminopimelate (meso-DAP), a precursor of L-lysine and an essential component of the bacterial peptidoglycan. This chain is Diaminopimelate epimerase, found in Rickettsia rickettsii (strain Iowa).